We begin with the raw amino-acid sequence, 322 residues long: 2-oxoglutarate-dependent dioxygenase caaD (322 aa).

One can recognise a Fe2OG dioxygenase domain in the interval 172–279 (TGNAAMFLKL…FAVPAFWHGD (108 aa)). Fe cation contacts are provided by His-200, Asp-202, and His-259. Arg-269 lines the 2-oxoglutarate pocket.

The protein belongs to the iron/ascorbate-dependent oxidoreductase family. It depends on Fe(2+) as a cofactor.

It functions in the pathway secondary metabolite biosynthesis. Functionally, 2-oxoglutarate-dependent dioxygenase; part of the gene cluster that produces the acyltetronic acid derivatives carlosic acid, agglomerin F and carlosic acid methyl ether. CaaD catalyzes the sequential oxidations of the terminal C-10 methyl group of the caaC product to form carboxylic acid which is necessary for the biosynthesis of agglomerin F. The chain is 2-oxoglutarate-dependent dioxygenase caaD from Aspergillus niger (strain ATCC MYA-4892 / CBS 513.88 / FGSC A1513).